Reading from the N-terminus, the 414-residue chain is Histidine--tRNA ligase (414 aa).

Belongs to the class-II aminoacyl-tRNA synthetase family. Homodimer.

The protein localises to the cytoplasm. It carries out the reaction tRNA(His) + L-histidine + ATP = L-histidyl-tRNA(His) + AMP + diphosphate + H(+). The chain is Histidine--tRNA ligase from Mycoplasma mycoides subsp. mycoides SC (strain CCUG 32753 / NCTC 10114 / PG1).